A 339-amino-acid polypeptide reads, in one-letter code: Phenylalanine--tRNA ligase alpha subunit (339 aa).

Glu254 is a binding site for Mg(2+).

The protein belongs to the class-II aminoacyl-tRNA synthetase family. Phe-tRNA synthetase alpha subunit type 1 subfamily. In terms of assembly, tetramer of two alpha and two beta subunits. Requires Mg(2+) as cofactor.

The protein resides in the cytoplasm. The catalysed reaction is tRNA(Phe) + L-phenylalanine + ATP = L-phenylalanyl-tRNA(Phe) + AMP + diphosphate + H(+). The sequence is that of Phenylalanine--tRNA ligase alpha subunit from Clostridium perfringens (strain ATCC 13124 / DSM 756 / JCM 1290 / NCIMB 6125 / NCTC 8237 / Type A).